The primary structure comprises 88 residues: Kunitz-type U15-theraphotoxin-Hhn1i (88 aa).

The signal sequence occupies residues 1-27 (MGTARFLRAVLLLSVLLMVTFPALLSA). Residues 28-33 (EHHDGR) constitute a propeptide that is removed on maturation. A BPTI/Kunitz inhibitor domain is found at 37–85 (CRLPSDSGDCLRFFEMRYFDGTTCTKFVYGGYGGNDNRFPTEKACMKRC). 2 disulfides stabilise this stretch: Cys-37–Cys-85 and Cys-60–Cys-81.

The protein belongs to the venom Kunitz-type family. 03 (sub-Kunitz) subfamily. In terms of tissue distribution, expressed by the venom gland.

It localises to the secreted. Functionally, serine protease inhibitor that inhibits trypsin at a molar ratio of 1:1. The protein is Kunitz-type U15-theraphotoxin-Hhn1i of Cyriopagopus hainanus (Chinese bird spider).